The primary structure comprises 450 residues: UDP-N-acetylmuramoylalanine--D-glutamate ligase (450 aa).

ATP is bound at residue 118–124 (GSNGKTT).

It belongs to the MurCDEF family.

It is found in the cytoplasm. It carries out the reaction UDP-N-acetyl-alpha-D-muramoyl-L-alanine + D-glutamate + ATP = UDP-N-acetyl-alpha-D-muramoyl-L-alanyl-D-glutamate + ADP + phosphate + H(+). The protein operates within cell wall biogenesis; peptidoglycan biosynthesis. In terms of biological role, cell wall formation. Catalyzes the addition of glutamate to the nucleotide precursor UDP-N-acetylmuramoyl-L-alanine (UMA). This Halalkalibacterium halodurans (strain ATCC BAA-125 / DSM 18197 / FERM 7344 / JCM 9153 / C-125) (Bacillus halodurans) protein is UDP-N-acetylmuramoylalanine--D-glutamate ligase.